Here is a 213-residue protein sequence, read N- to C-terminus: Pyridoxine/pyridoxamine 5'-phosphate oxidase (213 aa).

Residues 8–11 (RREY) and Lys-67 contribute to the substrate site. Residues 62–67 (RIVLLK), 77–78 (FT), Arg-83, Lys-84, and Gln-106 contribute to the FMN site. Positions 124, 128, and 132 each coordinate substrate. Residues 141-142 (QS) and Trp-186 contribute to the FMN site. 192–194 (RLH) is a substrate binding site. Arg-196 serves as a coordination point for FMN.

Belongs to the pyridoxamine 5'-phosphate oxidase family. As to quaternary structure, homodimer. Requires FMN as cofactor.

It carries out the reaction pyridoxamine 5'-phosphate + O2 + H2O = pyridoxal 5'-phosphate + H2O2 + NH4(+). The catalysed reaction is pyridoxine 5'-phosphate + O2 = pyridoxal 5'-phosphate + H2O2. Its pathway is cofactor metabolism; pyridoxal 5'-phosphate salvage; pyridoxal 5'-phosphate from pyridoxamine 5'-phosphate: step 1/1. The protein operates within cofactor metabolism; pyridoxal 5'-phosphate salvage; pyridoxal 5'-phosphate from pyridoxine 5'-phosphate: step 1/1. Functionally, catalyzes the oxidation of either pyridoxine 5'-phosphate (PNP) or pyridoxamine 5'-phosphate (PMP) into pyridoxal 5'-phosphate (PLP). The protein is Pyridoxine/pyridoxamine 5'-phosphate oxidase of Shewanella woodyi (strain ATCC 51908 / MS32).